Reading from the N-terminus, the 471-residue chain is Tryptophanase (471 aa).

Lys-5, Lys-115, and Lys-156 each carry N6-acetyllysine. At Lys-270 the chain carries N6-(pyridoxal phosphate)lysine. Lys-450 carries the post-translational modification N6-acetyllysine.

Belongs to the beta-eliminating lyase family. Homotetramer. It depends on pyridoxal 5'-phosphate as a cofactor.

It carries out the reaction L-tryptophan + H2O = indole + pyruvate + NH4(+). Its pathway is amino-acid degradation; L-tryptophan degradation via pyruvate pathway; indole and pyruvate from L-tryptophan: step 1/1. The polypeptide is Tryptophanase (Escherichia coli O139:H28 (strain E24377A / ETEC)).